The sequence spans 410 residues: Probable serine/threonine-protein kinase PBL9 (410 aa).

Gly2 is lipidated: N-myristoyl glycine. The S-palmitoyl cysteine moiety is linked to residue Cys4. The interval 11-46 (AESSGASTKYDAKDIGSLGSKASSVSVRPSPRTEGE) is disordered. The Protein kinase domain occupies 68 to 352 (FRPDSVLGEG…MSEVVSHLEH (285 aa)). Residues 74–82 (LGEGGFGCV) and Lys106 each bind ATP. Residue Tyr151 is modified to Phosphotyrosine. Asp203 functions as the Proton acceptor in the catalytic mechanism. Residues Ser207 and Ser237 each carry the phosphoserine modification. Residues Thr238 and Thr243 each carry the phosphothreonine modification. Tyr251 carries the phosphotyrosine modification.

Belongs to the protein kinase superfamily. Ser/Thr protein kinase family. In terms of assembly, interacts with the Xanthomonas campestris effector XopAC/AvrAC. In terms of tissue distribution, expressed in stomatal guard cells of leaves.

It localises to the cell membrane. It catalyses the reaction L-seryl-[protein] + ATP = O-phospho-L-seryl-[protein] + ADP + H(+). It carries out the reaction L-threonyl-[protein] + ATP = O-phospho-L-threonyl-[protein] + ADP + H(+). In terms of biological role, possible bi-functional kinase. In vitro, it exhibits serine/threonine activity. In vivo, can phosphorylate tyrosine residues of limited substrates. May be involved in plant defense signaling. This is Probable serine/threonine-protein kinase PBL9 from Arabidopsis thaliana (Mouse-ear cress).